Here is a 184-residue protein sequence, read N- to C-terminus: Adenylate kinase 1 (184 aa).

11–16 lines the ATP pocket; that stretch reads GAGKGT. Residues 31-60 form an NMP region; it reads STGDILRQAMKEQTPLGIKAQSYVDSGELV. AMP contacts are provided by residues Thr-32, Arg-37, 58–60, 86–89, and Gln-93; these read ELV and GFPR. The LID stretch occupies residues 127–133; the sequence is SRGRKDD. An ATP-binding site is contributed by Arg-128. AMP-binding residues include Arg-130 and Arg-141. Residue Gln-169 coordinates ATP.

It belongs to the adenylate kinase family. In terms of assembly, monomer.

Its subcellular location is the cytoplasm. The catalysed reaction is AMP + ATP = 2 ADP. It functions in the pathway purine metabolism; AMP biosynthesis via salvage pathway; AMP from ADP: step 1/1. In terms of biological role, catalyzes the reversible transfer of the terminal phosphate group between ATP and AMP. Plays an important role in cellular energy homeostasis and in adenine nucleotide metabolism. This is Adenylate kinase 1 from Nostoc sp. (strain PCC 7120 / SAG 25.82 / UTEX 2576).